The following is a 149-amino-acid chain: Nucleoside diphosphate kinase (149 aa).

ATP-binding residues include lysine 9, phenylalanine 57, arginine 85, threonine 91, arginine 102, and asparagine 112. Catalysis depends on histidine 115, which acts as the Pros-phosphohistidine intermediate.

The protein belongs to the NDK family. In terms of assembly, homotetramer. Requires Mg(2+) as cofactor.

The protein localises to the cytoplasm. It catalyses the reaction a 2'-deoxyribonucleoside 5'-diphosphate + ATP = a 2'-deoxyribonucleoside 5'-triphosphate + ADP. The catalysed reaction is a ribonucleoside 5'-diphosphate + ATP = a ribonucleoside 5'-triphosphate + ADP. Major role in the synthesis of nucleoside triphosphates other than ATP. The ATP gamma phosphate is transferred to the NDP beta phosphate via a ping-pong mechanism, using a phosphorylated active-site intermediate. In Roseiflexus castenholzii (strain DSM 13941 / HLO8), this protein is Nucleoside diphosphate kinase.